The following is a 346-amino-acid chain: Putative D-xylulose reductase (346 aa).

Zn(2+) contacts are provided by cysteine 39, histidine 64, and glutamate 150.

Belongs to the zinc-containing alcohol dehydrogenase family. Zn(2+) is required as a cofactor.

It carries out the reaction xylitol + NAD(+) = D-xylulose + NADH + H(+). In Rhizobium meliloti (strain 1021) (Ensifer meliloti), this protein is Putative D-xylulose reductase.